We begin with the raw amino-acid sequence, 322 residues long: Protein lin-56 (322 aa).

A disordered region spans residues Ser264–Ala322. A compositionally biased stretch (basic and acidic residues) spans Glu275–Tyr304.

Widely expressed throughout embryonic development. Expressed in the six multipotent ventral ectodermal blast cells, P3.p-P8.p, which generate the vulva and in their descendants throughout vulval development.

The protein localises to the nucleus. Its function is as follows. Required for translation, stability and/or localization of lin-15a. In Caenorhabditis elegans, this protein is Protein lin-56 (lin-56).